The primary structure comprises 120 residues: Large ribosomal subunit protein bL12 (120 aa).

It belongs to the bacterial ribosomal protein bL12 family. Homodimer. Part of the ribosomal stalk of the 50S ribosomal subunit. Forms a multimeric L10(L12)X complex, where L10 forms an elongated spine to which 2 to 4 L12 dimers bind in a sequential fashion. Binds GTP-bound translation factors.

In terms of biological role, forms part of the ribosomal stalk which helps the ribosome interact with GTP-bound translation factors. Is thus essential for accurate translation. In Haemophilus ducreyi (strain 35000HP / ATCC 700724), this protein is Large ribosomal subunit protein bL12.